The chain runs to 1486 residues: Chromosome partition protein MukB (1486 aa).

34-41 contacts ATP; it reads GGNGAGKS. Coiled-coil stretches lie at residues 326–418, 444–480, and 509–603; these read LEAD…QYNQ, LETFQAKELEATEKMLSLEQKMSMAQTAHSQFEQAYQ, and RHLA…RAPV. Residues 666–783 are flexible hinge; it reads PGGSEDQRLN…EVPLFGRAAR (118 aa). 3 coiled-coil regions span residues 835-923, 977-1115, and 1209-1266; these read EAEI…AKLE, EMLS…TAKA, and VEAI…QNVS.

This sequence belongs to the SMC family. MukB subfamily. As to quaternary structure, homodimerization via its hinge domain. Binds to DNA via its C-terminal region. Interacts, and probably forms a ternary complex, with MukE and MukF via its C-terminal region. The complex formation is stimulated by calcium or magnesium. Interacts with tubulin-related protein FtsZ.

Its subcellular location is the cytoplasm. The protein localises to the nucleoid. Plays a central role in chromosome condensation, segregation and cell cycle progression. Functions as a homodimer, which is essential for chromosome partition. Involved in negative DNA supercoiling in vivo, and by this means organize and compact chromosomes. May achieve or facilitate chromosome segregation by condensation DNA from both sides of a centrally located replisome during cell division. The polypeptide is Chromosome partition protein MukB (Escherichia fergusonii (strain ATCC 35469 / DSM 13698 / CCUG 18766 / IAM 14443 / JCM 21226 / LMG 7866 / NBRC 102419 / NCTC 12128 / CDC 0568-73)).